Here is a 339-residue protein sequence, read N- to C-terminus: Glycerol-3-phosphate dehydrogenase [NAD(P)+] (339 aa).

Positions 15, 16, 36, and 110 each coordinate NADPH. Positions 110, 139, and 141 each coordinate sn-glycerol 3-phosphate. A143 lines the NADPH pocket. Sn-glycerol 3-phosphate-binding residues include K195, D248, S258, R259, and N260. K195 functions as the Proton acceptor in the catalytic mechanism. R259 serves as a coordination point for NADPH. V283 and E285 together coordinate NADPH.

Belongs to the NAD-dependent glycerol-3-phosphate dehydrogenase family.

Its subcellular location is the cytoplasm. It carries out the reaction sn-glycerol 3-phosphate + NAD(+) = dihydroxyacetone phosphate + NADH + H(+). The catalysed reaction is sn-glycerol 3-phosphate + NADP(+) = dihydroxyacetone phosphate + NADPH + H(+). Its pathway is membrane lipid metabolism; glycerophospholipid metabolism. Catalyzes the reduction of the glycolytic intermediate dihydroxyacetone phosphate (DHAP) to sn-glycerol 3-phosphate (G3P), the key precursor for phospholipid synthesis. The chain is Glycerol-3-phosphate dehydrogenase [NAD(P)+] from Shigella flexneri serotype 5b (strain 8401).